The sequence spans 589 residues: Transcription factor atf-6 homolog (589 aa).

A compositionally biased stretch (basic and acidic residues) spans 1–16; sequence MNFDNTVHESNFDDLL. Residues 1–82 form a disordered region; sequence MNFDNTVHES…SSPPLSCANF (82 aa). Composition is skewed to low complexity over residues 36-54 and 67-78; these read GTDE…FSDQ and GDSSSDSSPPLS. A bZIP domain is found at 250-299; the sequence is QNRKIRNRMYAQASRMRKKEADEHMKMNLQELLQENEILRTENAALKQRL. Residues 252 to 275 form a basic motif region; the sequence is RKIRNRMYAQASRMRKKEADEHMK. The stretch at 271–305 forms a coiled coil; sequence DEHMKMNLQELLQENEILRTENAALKQRLAFFEHE. The tract at residues 281–295 is leucine-zipper; the sequence is LLQENEILRTENAAL. The chain crosses the membrane as a helical span at residues 324–344; sequence IIAAGSVLMMFGLFAVISPFN.

This sequence belongs to the bZIP family. ATF subfamily.

The protein resides in the nucleus. The protein localises to the membrane. In terms of biological role, transcription factor. Plays a role in the unfolded protein response (UPR), perhaps mainly during constitutive endoplasmic reticulum (ER) stress, by activating transcription of genes involved in the UPR. Plays a role in modulating lifespan, acting by positively regulating expression of calcium-binding chaperone crt-1, thereby influencing ER calcium homeostasis. By activating the UPR pathway, confers adaptive protection to subsequent exposure to hypoxia. Involved in protection against proteotoxicity, probably acting via the UPR. Probably acts in the UPR in parallel with the ire-1-xbp-1 and pek-1 pathways. May be regulated by endopeptidase S2P-mediated proteolytic cleavage. This Caenorhabditis elegans protein is Transcription factor atf-6 homolog.